The chain runs to 519 residues: Probable U3 small nucleolar RNA-associated protein 18 (519 aa).

9 WD repeats span residues 26–66, 71–111, 216–254, 259–298, 306–345, 347–386, 390–429, 438–479, and 485–519; these read DKEN…MFDT, GAKD…RLMI, SHSGIRCMSIHPYFPLLLTCGFDRTLRIYQLDGKVNPLV, LRSSALQTALFHPDGKRVIAAGRRKYMYIWDLESAQVQKV, NFQPSMERFHVDPTGKYIALEGRSGHINLLHALTGQFATS, KIEGVLSDVLFTSDGSEMLVLSYGAEVWHFNVEQRSVVRR, QDGVSTTHFCLDPSNKYLAIGSKSGIVNIYDLQTSNADAA, NITF…VFRN, and TPLGRVTCLAFGKGGELCVGNEAGRVGLWKLAHYD.

The protein belongs to the WD repeat UTP18 family. As to quaternary structure, component of the ribosomal small subunit (SSU) processome.

The protein localises to the nucleus. It localises to the nucleolus. Involved in nucleolar processing of pre-18S ribosomal RNA. This chain is Probable U3 small nucleolar RNA-associated protein 18, found in Schizosaccharomyces pombe (strain 972 / ATCC 24843) (Fission yeast).